Reading from the N-terminus, the 351-residue chain is tRNA pseudouridine synthase D (351 aa).

Aspartate 81 serves as the catalytic Nucleophile. A TRUD domain is found at glycine 158–leucine 304.

The protein belongs to the pseudouridine synthase TruD family.

The enzyme catalyses uridine(13) in tRNA = pseudouridine(13) in tRNA. In terms of biological role, responsible for synthesis of pseudouridine from uracil-13 in transfer RNAs. The polypeptide is tRNA pseudouridine synthase D (Aliivibrio fischeri (strain ATCC 700601 / ES114) (Vibrio fischeri)).